The primary structure comprises 248 residues: uncharacterized protein (248 aa).

This sequence to M.jannaschii MJ1452.

This is an uncharacterized protein from Methanothermobacter thermautotrophicus (strain ATCC 29096 / DSM 1053 / JCM 10044 / NBRC 100330 / Delta H) (Methanobacterium thermoautotrophicum).